The sequence spans 269 residues: 5'-nucleotidase SurE (269 aa).

A divalent metal cation-binding residues include Asp-11, Asp-12, Ser-43, and Asn-101.

This sequence belongs to the SurE nucleotidase family. The cofactor is a divalent metal cation.

It is found in the cytoplasm. The catalysed reaction is a ribonucleoside 5'-phosphate + H2O = a ribonucleoside + phosphate. In terms of biological role, nucleotidase that shows phosphatase activity on nucleoside 5'-monophosphates. In Prochlorococcus marinus (strain AS9601), this protein is 5'-nucleotidase SurE.